A 1563-amino-acid chain; its full sequence is MKRGLLPFNKIKLLLASPEQILSWSHGEVKRPETLNYRTLKPEKEGLFCAKIFGPLKDYECLCGKYKGKRFEGTICDRCGVEVTKAYVRRERFGHITLATPCAHIWFLKSSPSKIGALLGLSARDIEKVIYFESYLVVEYPTPDMEATFSNSENTIPVIKDGVTHHVKLHVVTEEQYEKEFAYSIDNRYESGMGAEFVRYVLSILDLETFAFKLKKILKPYTFGFEDLGPKMELEHKKLYEKIIMFLADRVKLYSVGIATSLNGVQMSIEDVIHGIVSESIYLNIKTGEISNQDLGDDWYTSKDAIRYRFEYVRGQNQNIPVFDKIQEDVRNIVLKDFSDTRVKNLVKTLKLVEGFLKSSNRPEWMILTVLPVIPPELRPLVALDGGKFATSDLNDLYRRLINRNNRLKRLIDLDAPDIIVRNEKRMLQESVDVLIDNGKRGKVVSQHNRPLKSLSDYLKGKQGRFRQNLLGKRVDYSGRSVIVVGPSLKMHQCGLPKIMALELFKPFVYRRLEEKGYATSIKNARKMVDQKQPEVWECLEEVVKQHPVLLNRAPTLHRMSIQAFEPVLVEGKAIQLHPLVCPPFNADFDGDQMAVHVPLGIEAQLESYILILSTQNILSPANGRPIMLPSQDMVLGLFYASNYVKGAKGEGKVFFSKEDAFLAFENKKIDIHAVIKVKIGDTFVETNIGRLLINEALPKGYRFVNEVLDKKSISKLIADIHKIYGSEITAQTLDRLKEFGFEMATRAGISIGIEDMKIPKAKKRLVDKAFHQMDEVLDQYRKGIITNKERYNKTIDIWSQTTEDVTKAMFSEIEKSEQIENGKKLPGLFNPIYMMANSGARGNKDQLRQLAGMRGLMAKHSGEFIETPITSNFREGLSVLEYFISTYGARKGLADTALKTSFAGYLTRRLVDVAQDMVISEYDCGTKKYEVIEAIVESGEEKISLKERLIGRVLAEDIYDPNSKELIAKANDVLDEELTARIQQAGVVQVKARSVLNCESENGICSMCYGWDLSQRKLVSPGEAVGIIAAQSIGEPGTQLTMRTFHIGGAATAQKVQSELIIESSGIIKFQGLRLLKNRNGGLINISQEGVIFVLDPNGRTIERHTVPYAAEILFKDGSEVKQGDIVAKWDPFNTYIIAESSGELVLKDIIVDVTVREEKDTLTGKTAIVVSFLRAKDAQLHSPRIVIKSEDGNEYSYDLPVNSILNIPFEKLKTIWDKCLACSEAEKNDVQHNYYYLDKFVVHPGDIIARIPKETTKVRDIVGGLPRVEELFEARKPKNPAIISEIDGIVKIYEDADEVMVISPKGTKKYDIKNEFILIKHGQEVKEGTKITDTIVSDVSGKAIVRAKGSKIVVYNKQTGQEKVYSVPKGKFLQVKDGDYVKVGDQLTDGTPLLEEILKIKGIDELQKFLLKEVQMVYKLQGVDINDKHIEIIIRQMLRKRVIVDPGDSRFVANEEVDVIEFNKEVERIRKEDGKIPKAEPILVGITKAALSTKSWISAASFQETTRVLTEAASEGKVDDLSGIKENVIIGNLIPAGTGLEEYKNVKIEIAEHVTQFKKQT.

Residues cysteine 61, cysteine 63, cysteine 76, and cysteine 79 each contribute to the Zn(2+) site. Mg(2+) is bound by residues aspartate 588, aspartate 590, and aspartate 592. Positions 925, 999, 1006, and 1009 each coordinate Zn(2+).

Belongs to the RNA polymerase beta' chain family. As to quaternary structure, the RNAP catalytic core consists of 2 alpha, 1 beta, 1 beta' and 1 omega subunit. When a sigma factor is associated with the core the holoenzyme is formed, which can initiate transcription. It depends on Mg(2+) as a cofactor. The cofactor is Zn(2+).

It carries out the reaction RNA(n) + a ribonucleoside 5'-triphosphate = RNA(n+1) + diphosphate. Its function is as follows. DNA-dependent RNA polymerase catalyzes the transcription of DNA into RNA using the four ribonucleoside triphosphates as substrates. This chain is DNA-directed RNA polymerase subunit beta', found in Hydrogenobaculum sp. (strain Y04AAS1).